The chain runs to 176 residues: Ribosome maturation factor RimM (176 aa).

The region spanning 100–173 (KDEYHYHDLI…WLLINPPPGL (74 aa)) is the PRC barrel domain.

The protein belongs to the RimM family. In terms of assembly, binds ribosomal protein uS19.

The protein localises to the cytoplasm. In terms of biological role, an accessory protein needed during the final step in the assembly of 30S ribosomal subunit, possibly for assembly of the head region. Essential for efficient processing of 16S rRNA. May be needed both before and after RbfA during the maturation of 16S rRNA. It has affinity for free ribosomal 30S subunits but not for 70S ribosomes. In Prochlorococcus marinus (strain NATL2A), this protein is Ribosome maturation factor RimM.